The following is a 467-amino-acid chain: Mitogen-activated protein kinase kinase kinase 8 (467 aa).

Residue threonine 80 is modified to Phosphothreonine. Phosphoserine occurs at positions 138 and 141. ATP contacts are provided by residues 144-152 (VPRGAFGKV) and lysine 167. The Protein kinase domain occupies 146–388 (RGAFGKVYLA…AADLLKHEAL (243 aa)). Aspartate 253 functions as the Proton acceptor in the catalytic mechanism. Threonine 290 carries the post-translational modification Phosphothreonine. Residues serine 400 and serine 443 each carry the phosphoserine modification.

Belongs to the protein kinase superfamily. STE Ser/Thr protein kinase family. MAP kinase kinase kinase subfamily. In terms of assembly, forms a ternary complex with NFKB1/p105 and TNIP2. Interacts with NFKB1; the interaction increases the stability of MAP3K8 but inhibits its MEK phosphorylation activity, whereas loss of interaction following LPS stimulation leads to its degradation. Interacts with CD40 and TRAF6; the interaction is required for ERK activation. Interacts with KSR2; the interaction inhibits ERK and NF-kappa-B activation. Mg(2+) is required as a cofactor. Autophosphorylated. Expressed in spleen, thymus, liver and lung.

It localises to the cytoplasm. It catalyses the reaction L-seryl-[protein] + ATP = O-phospho-L-seryl-[protein] + ADP + H(+). It carries out the reaction L-threonyl-[protein] + ATP = O-phospho-L-threonyl-[protein] + ADP + H(+). In terms of biological role, required for lipopolysaccharide (LPS)-induced, TLR4-mediated activation of the MAPK/ERK pathway in macrophages, thus being critical for production of the pro-inflammatory cytokine TNF-alpha (TNF) during immune responses. Involved in the regulation of T-helper cell differentiation and IFNG expression in T-cells. Involved in mediating host resistance to bacterial infection through negative regulation of type I interferon (IFN) production. Transduces CD40 and TNFRSF1A signals that activate ERK in B-cells and macrophages, and thus may play a role in the regulation of immunoglobulin production. May also play a role in the transduction of TNF signals that activate JNK and NF-kappa-B in some cell types. In adipocytes, activates MAPK/ERK pathway in an IKBKB-dependent manner in response to IL1B and TNF, but not insulin, leading to induction of lipolysis. Plays a role in the cell cycle. The polypeptide is Mitogen-activated protein kinase kinase kinase 8 (Map3k8) (Rattus norvegicus (Rat)).